A 92-amino-acid chain; its full sequence is C-C motif chemokine 3 (92 aa).

The N-terminal stretch at 1–26 (MQVSTAALAVLLCTVALCNRISATFA) is a signal peptide. Intrachain disulfides connect C33–C57 and C34–C73.

This sequence belongs to the intercrine beta (chemokine CC) family. In terms of assembly, self-associates. Also heterodimer of MIP-1-alpha(4-69) and MIP-1-beta(3-69). Interacts with CCR1.

Its subcellular location is the secreted. In terms of biological role, monokine with inflammatory and chemokinetic properties. Binds to CCR1, CCR4 and CCR5. One of the major HIV-suppressive factors produced by CD8+ T-cells. Recombinant MIP-1-alpha induces a dose-dependent inhibition of different strains of HIV-1, HIV-2, and simian immunodeficiency virus (SIV). The chain is C-C motif chemokine 3 (CCL3) from Macaca mulatta (Rhesus macaque).